The following is a 348-amino-acid chain: Anthranilate phosphoribosyltransferase (348 aa).

5-phospho-alpha-D-ribose 1-diphosphate-binding positions include glycine 89, 92–93 (GD), threonine 97, 99–102 (NIST), 117–125 (KHGNRSVSS), and serine 129. Glycine 89 serves as a coordination point for anthranilate. Serine 101 provides a ligand contact to Mg(2+). Asparagine 120 provides a ligand contact to anthranilate. An anthranilate-binding site is contributed by arginine 175. Residues aspartate 233 and glutamate 234 each contribute to the Mg(2+) site.

Belongs to the anthranilate phosphoribosyltransferase family. Homodimer. Mg(2+) is required as a cofactor.

It carries out the reaction N-(5-phospho-beta-D-ribosyl)anthranilate + diphosphate = 5-phospho-alpha-D-ribose 1-diphosphate + anthranilate. The protein operates within amino-acid biosynthesis; L-tryptophan biosynthesis; L-tryptophan from chorismate: step 2/5. In terms of biological role, catalyzes the transfer of the phosphoribosyl group of 5-phosphorylribose-1-pyrophosphate (PRPP) to anthranilate to yield N-(5'-phosphoribosyl)-anthranilate (PRA). This chain is Anthranilate phosphoribosyltransferase, found in Shewanella putrefaciens (strain CN-32 / ATCC BAA-453).